The sequence spans 490 residues: Glutamyl-tRNA(Gln) amidotransferase subunit A (490 aa).

Active-site charge relay system residues include K81 and S156. S180 acts as the Acyl-ester intermediate in catalysis.

Belongs to the amidase family. GatA subfamily. Heterotrimer of A, B and C subunits.

It carries out the reaction L-glutamyl-tRNA(Gln) + L-glutamine + ATP + H2O = L-glutaminyl-tRNA(Gln) + L-glutamate + ADP + phosphate + H(+). Allows the formation of correctly charged Gln-tRNA(Gln) through the transamidation of misacylated Glu-tRNA(Gln) in organisms which lack glutaminyl-tRNA synthetase. The reaction takes place in the presence of glutamine and ATP through an activated gamma-phospho-Glu-tRNA(Gln). The protein is Glutamyl-tRNA(Gln) amidotransferase subunit A of Nocardia farcinica (strain IFM 10152).